Here is a 485-residue protein sequence, read N- to C-terminus: Trk system potassium uptake protein TrkH (485 aa).

Over 1-2 (MQ) the chain is Cytoplasmic. A helical transmembrane segment spans residues 3–29 (FRSIIRIVGLLLALFSVTMLAPALVAL). At 30–35 (LYRDGA) the chain is on the periplasmic side. A helical transmembrane segment spans residues 36-57 (GVPFVTTFFVLLFCGAMCWFPN). At 58-65 (RRHKHELK) the chain is on the cytoplasmic side. A helical membrane pass occupies residues 66 to 90 (SRDGFLIVVLFWTVLGSAGSLPFLI). The helical; Pore-forming intramembrane region spans 98–109 (VTDAFFESFSAL). The stretch at 110–115 (TTTGAT) is an intramembrane region. The segment at 110–115 (TTTGAT) is selectivity filter part 1. K(+) contacts are provided by Thr-111 and Thr-112. Topologically, residues 116 to 124 (VIVGLDELP) are periplasmic. A helical transmembrane segment spans residues 125–150 (KAILFYRQFLQWFGGMGIIVLAVAIL). Over 151–177 (PVLGIGGMQLYRAEIPGPVKDTKMTPR) the chain is Cytoplasmic. Residues 178-202 (IAETAKALWYIYLSLTIACAVAFWL) traverse the membrane as a helical segment. Residues 203–205 (AGM) are Periplasmic-facing. Thr-206 is an intramembrane region. An intramembrane region (helical; Pore-forming) is located at residues 207-218 (PFDAISHSFSTI). The stretch at 219 to 224 (AIGGFS) is an intramembrane region. The interval 219-224 (AIGGFS) is selectivity filter part 2. Residues Ile-220 and Gly-221 each contribute to the K(+) site. The Periplasmic portion of the chain corresponds to 225–234 (THDASMGYFD). Positions 235 to 250 (SYAINLITVVFLLISA) form an intramembrane region, helical. A helical membrane pass occupies residues 276 to 296 (FRAFIFIQVLLFLVCFLLLLK). The helical; Pore-forming intramembrane region spans 303 to 318 (PYDAFDQALFQTVSIS). Residues 319-324 (TTAGFT) lie within the membrane without spanning it. The interval 319-324 (TTAGFT) is selectivity filter part 3. K(+) is bound by residues Thr-320 and Ala-321. At 325-332 (TTGFADWP) the chain is on the periplasmic side. An intramembrane region (helical) is located at residues 333–344 (LFLPVLLLFSSF). Positions 345–357 (IGGCAGSTGGGMK) form an intramembrane region, note=Loop between two helices. A helical membrane pass occupies residues 392-419 (PQRVVDAVWGFFSAYALVFVVCMLGLIA). The Periplasmic segment spans residues 420 to 421 (TG). An intramembrane segment occupies 422 to 423 (MD). Positions 424–434 (ELSAFSAVAAT) form an intramembrane region, helical; Pore-forming. An intramembrane segment occupies 435–441 (LNNLGPG). A selectivity filter part 4 region spans residues 436–441 (NNLGPG). Residues Asn-437 and Leu-438 each contribute to the K(+) site. Residues 442–453 (LGEVALHFGDVN) are Periplasmic-facing. The helical intramembrane region spans 454-465 (DKAKWVLIVSML).

This sequence belongs to the TrkH potassium transport family. As to quaternary structure, homodimer.

The protein resides in the cell inner membrane. Low-affinity potassium transport system. Interacts with trk system potassium uptake protein TrkA and requires TrkE for transport activity. Selective for permeation of potassium ion and rubidium ion over smaller ions such as natrium or litium. The chain is Trk system potassium uptake protein TrkH from Vibrio parahaemolyticus serotype O3:K6 (strain RIMD 2210633).